Here is a 301-residue protein sequence, read N- to C-terminus: Growth-regulating factor 2 (301 aa).

Positions 11–46 constitute a QLQ domain; that stretch reads LFTATQWQELEHQALIYKYMAAGAPVPPDLLLHLRH. Short sequence motifs (bipartite nuclear localization signal) lie at residues 83–102 and 120–127; these read RRVE…KKWR and RGKNRSRK. Positions 87–131 constitute a WRC domain; the sequence is DPEPGRCRRTDGKKWRCSREAYGESKYCEKHMHRGKNRSRKPVEM.

It belongs to the GRF family.

Its subcellular location is the nucleus. Its function is as follows. Transcription activator that plays a regulatory role in gibberellin-induced stem elongation. This chain is Growth-regulating factor 2 (GRF2), found in Oryza sativa subsp. japonica (Rice).